A 132-amino-acid chain; its full sequence is ATP synthase epsilon chain, chloroplastic (132 aa).

It belongs to the ATPase epsilon chain family. In terms of assembly, F-type ATPases have 2 components, CF(1) - the catalytic core - and CF(0) - the membrane proton channel. CF(1) has five subunits: alpha(3), beta(3), gamma(1), delta(1), epsilon(1). CF(0) has three main subunits: a, b and c.

It localises to the plastid. The protein resides in the chloroplast thylakoid membrane. Its function is as follows. Produces ATP from ADP in the presence of a proton gradient across the membrane. In Pylaiella littoralis (Seaweed), this protein is ATP synthase epsilon chain, chloroplastic.